The primary structure comprises 639 residues: NADP-dependent malic enzyme, chloroplastic (639 aa).

The transit peptide at 1–49 (MLSARAAATAAAAAASPLWKRGEGGSSGSGSGCTSCREVRRRAAAVRVR) directs the protein to the chloroplast. The tract at residues 15-34 (ASPLWKRGEGGSSGSGSGCT) is disordered. The Proton donor role is filled by Y187. Position 240 (R240) interacts with NAD(+). The active-site Proton acceptor is K258. Positions 330, 331, and 354 each coordinate a divalent metal cation. D354 contributes to the NAD(+) binding site. NADP(+) is bound at residue 383-399 (LFLGAGEAGTGIAELIA). N495 is an NAD(+) binding site.

This sequence belongs to the malic enzymes family. As to quaternary structure, homotetramer. The cofactor is Mg(2+). Requires Mn(2+) as cofactor.

The protein resides in the plastid. The protein localises to the chloroplast. It carries out the reaction (S)-malate + NADP(+) = pyruvate + CO2 + NADPH. It catalyses the reaction oxaloacetate + H(+) = pyruvate + CO2. It participates in photosynthesis; C4 acid pathway. In terms of biological role, the chloroplastic ME isoform decarboxylates malate shuttled from neighboring mesophyll cells. The CO(2) released is then refixed by ribulose-bisphosphate carboxylase. This pathway eliminates the photorespiratory loss of CO(2) that occurs in most plants. In Oryza sativa subsp. japonica (Rice), this protein is NADP-dependent malic enzyme, chloroplastic (ME6).